A 440-amino-acid polypeptide reads, in one-letter code: APO protein 2, chloroplastic (440 aa).

A chloroplast-targeting transit peptide spans 1–62 (MSITYSAISF…SLQLNSRVVL (62 aa)). Residues 106-115 (ARERVKNNKD) show a composition bias toward basic and acidic residues. The segment at 106–126 (ARERVKNNKDKPKRPLPPPKN) is disordered. APO domains lie at 162 to 247 (ACGW…EIPE) and 332 to 417 (VCGY…VVPE).

Belongs to the APO family.

The protein localises to the plastid. It localises to the chloroplast. May be involved in the stable assembly of several 4Fe-4S cluster-containing complexes of chloroplasts. The protein is APO protein 2, chloroplastic (APO2) of Arabidopsis thaliana (Mouse-ear cress).